The sequence spans 151 residues: Deoxyuridine 5'-triphosphate nucleotidohydrolase (151 aa).

Substrate is bound by residues 70–72 (RSG), Asn-83, 87–89 (LID), and Met-97.

This sequence belongs to the dUTPase family. It depends on Mg(2+) as a cofactor.

It catalyses the reaction dUTP + H2O = dUMP + diphosphate + H(+). It participates in pyrimidine metabolism; dUMP biosynthesis; dUMP from dCTP (dUTP route): step 2/2. Its function is as follows. This enzyme is involved in nucleotide metabolism: it produces dUMP, the immediate precursor of thymidine nucleotides and it decreases the intracellular concentration of dUTP so that uracil cannot be incorporated into DNA. This Yersinia enterocolitica serotype O:8 / biotype 1B (strain NCTC 13174 / 8081) protein is Deoxyuridine 5'-triphosphate nucleotidohydrolase.